The chain runs to 515 residues: MGNCCPGSGDAEPASSDASTGNGSSSFKAGASPSSAPAQNKPPAPIGPVLGRPMEDVRSIYTIGKELGRGQFGVTSLCTHKATGQKFACKTIAKRKLSTKEDVEDVRREVQIMYHLAGQPNVVELKGAYEDKQSVHLVMELCAGGELFDRIIAKGHYTERAAASLLRTIVEIIHTCHSLGVIHRDLKPENFLLLSKDEDAPLKATDFGLSVFFKQGEVFKDIVGSAYYIAPEVLKRSYGPEADIWSVGVILYILLCGVPPFWAESEHGIFNSILRGQVDFTSDPWPRISASAKDLVRKMLNSDPKKRISAYEVLNHPWIKEDGEAPDTPLDNAVMNRLKQFRAMNQFKKAALRVIAGCLSEEEIRGLKEMFKSMDSDNSGTITVDELRKGLSKQGTKLTEAEVQQLMEAADADGNGTIDYDEFITATMHMNRMDREEHLYTAFQYFDKDNSGCISKEELEQALREKGLLDGRDIKDIISEVDADNDGRIDYSEFAAMMRKGNPEANPKKRRDVVI.

Residues M1 to G51 form a disordered region. The N-myristoyl glycine moiety is linked to residue G2. The segment covering A14–A38 has biased composition (low complexity). The 259-residue stretch at Y61–I319 folds into the Protein kinase domain. ATP is bound by residues L67–T75 and K90. The active-site Proton acceptor is the D185. The autoinhibitory domain stretch occupies residues A325 to I355. EF-hand domains are found at residues E362–K397, L398–M433, D434–L469, and D473–E504. Positions 375, 377, 379, 381, 386, 411, 413, 415, 417, 422, 447, 449, 451, 453, 458, 482, 484, 486, 488, and 493 each coordinate Ca(2+).

This sequence belongs to the protein kinase superfamily. Ser/Thr protein kinase family. CDPK subfamily. As to expression, expressed in heading panicles, spikelets and mature pollen grains.

The protein resides in the membrane. It carries out the reaction L-seryl-[protein] + ATP = O-phospho-L-seryl-[protein] + ADP + H(+). The catalysed reaction is L-threonyl-[protein] + ATP = O-phospho-L-threonyl-[protein] + ADP + H(+). With respect to regulation, activated by calcium. Autophosphorylation may play an important role in the regulation of the kinase activity. In terms of biological role, may play a role in signal transduction pathways that involve calcium as a second messenger. The polypeptide is Calcium-dependent protein kinase 2 (Oryza sativa subsp. japonica (Rice)).